The following is a 747-amino-acid chain: Cysteine--tRNA ligase, cytoplasmic (747 aa).

The interval 1–25 is disordered; sequence MTDSWERGKGRRTQPPWSAPNTQAQ. A compositionally biased stretch (polar residues) spans 15-25; that stretch reads PPWSAPNTQAQ. A Zn(2+)-binding site is contributed by C54. G55 contributes to the L-cysteine binding site. Positions 56–66 match the 'HIGH' region motif; the sequence is PTVYDASHMGH. T95 lines the L-cysteine pocket. The 'KIIK' region signature appears at 100 to 103; sequence KIIK. Zn(2+) contacts are provided by C347, H372, and E376. H372 is an L-cysteine binding site. Residues 405-409 carry the 'KMSKS' region motif; sequence KMSKS. K408 lines the ATP pocket. Residues 651 to 683 show a composition bias toward basic and acidic residues; it reads EEKRKAEEEKQRKKEEAARKKQQQEAAKLEKMK. The tract at residues 651–722 is disordered; it reads EEKRKAEEEK…KELSKGQSKK (72 aa).

This sequence belongs to the class-I aminoacyl-tRNA synthetase family. In terms of assembly, homodimer. It depends on Zn(2+) as a cofactor.

The protein resides in the cytoplasm. It carries out the reaction tRNA(Cys) + L-cysteine + ATP = L-cysteinyl-tRNA(Cys) + AMP + diphosphate. Functionally, catalyzes the ATP-dependent ligation of cysteine to tRNA(Cys). This chain is Cysteine--tRNA ligase, cytoplasmic (cars1), found in Xenopus tropicalis (Western clawed frog).